Reading from the N-terminus, the 618-residue chain is Sphingomyelin phosphodiesterase 2 (618 aa).

The signal sequence occupies residues 1–22; the sequence is MQQPLIILGIGIVLALVSNVES. The 84-residue stretch at 68–151 folds into the Saposin B-type domain; that stretch reads RKMSCLFCTF…AFIANCGHSD (84 aa). 3 disulfide bridges follow: Cys72/Cys147, Cys75/Cys140, and Cys103/Cys114. Asn89 carries N-linked (GlcNAc...) asparagine glycosylation. N-linked (GlcNAc...) asparagine glycosylation is present at Asn159. Residues Asp189 and His191 each contribute to the Zn(2+) site. 2 cysteine pairs are disulfide-bonded: Cys204-Cys216 and Cys217-Cys249. Asp278 contacts Zn(2+). Asn298 carries an N-linked (GlcNAc...) asparagine glycan. 4 residues coordinate Zn(2+): Asn318, His427, His461, and His463. A disulfide bond links Cys387 and Cys435. Asn525 and Asn568 each carry an N-linked (GlcNAc...) asparagine glycan. 2 disulfide bridges follow: Cys588/Cys594 and Cys600/Cys613.

Belongs to the acid sphingomyelinase family. The cofactor is Zn(2+).

It is found in the secreted. The catalysed reaction is a sphingomyelin + H2O = phosphocholine + an N-acylsphing-4-enine + H(+). The enzyme catalyses an N-acyl-15-methylhexadecasphing-4-enine-1-phosphocholine + H2O = an N-acyl-15-methylhexadecasphing-4-enine + phosphocholine + H(+). The protein operates within lipid metabolism; sphingolipid metabolism. Functionally, sphingomyelin phosphodiesterase (sphingomyelinase) that converts sphingomyelin (N-acyl-sphingoid-1-phosphocholine) to ceramide (N-acyl-sphingoid base) and phosphocholine at acidic pH. Displays its enzymatic activity when secreted. May play distinct roles in signaling. The polypeptide is Sphingomyelin phosphodiesterase 2 (asm-2) (Caenorhabditis elegans).